Reading from the N-terminus, the 307-residue chain is MKWKEIAVLTEGICIEAIAGIFHRLGSGGVVIEDPQAARKYENQEEWNPNLVSPDFLDHEFVLIKAYFMEEREVMEELQSCLETVKENFNVECKVFIDEVRDEDWESSWKKYYHRFKIGERLVIKPSWEEYQPQSGEVVIDIDPGMAFGTGIHASTRFCMKFIDHYVKGGEKLIDAGCGSGILSIAAAKLGAARVLAMDVEELSVKIARENVELNGLSDIITVKLGNIVEEIQTFEADMVAANITAEVVTCLIPEAAKVLKSGGYFFGSGIVDSRWPGVEKQLKTHGFVIEQVLQDVDWIGVAARKE.

T156, G177, D199, and N243 together coordinate S-adenosyl-L-methionine.

It belongs to the methyltransferase superfamily. PrmA family.

It localises to the cytoplasm. The catalysed reaction is L-lysyl-[protein] + 3 S-adenosyl-L-methionine = N(6),N(6),N(6)-trimethyl-L-lysyl-[protein] + 3 S-adenosyl-L-homocysteine + 3 H(+). Methylates ribosomal protein L11. This chain is Ribosomal protein L11 methyltransferase, found in Syntrophomonas wolfei subsp. wolfei (strain DSM 2245B / Goettingen).